The following is a 115-amino-acid chain: Na(+)/H(+) antiporter subunit C1 (115 aa).

Helical transmembrane passes span 1 to 21 (MEIL…YLIL), 28 to 48 (IIIG…TMGG), and 72 to 92 (LILT…VLAF).

It belongs to the CPA3 antiporters (TC 2.A.63) subunit C family. As to quaternary structure, may form a heterooligomeric complex that consists of seven subunits: mnhA1, mnhB1, mnhC1, mnhD1, mnhE1, mnhF1 and mnhG1.

The protein localises to the cell membrane. Mnh complex is a Na(+)/H(+) antiporter involved in Na(+) excretion. This is Na(+)/H(+) antiporter subunit C1 (mnhC1) from Staphylococcus saprophyticus subsp. saprophyticus (strain ATCC 15305 / DSM 20229 / NCIMB 8711 / NCTC 7292 / S-41).